The following is a 1141-amino-acid chain: Membrane-associated protein gex-3 (1141 aa).

This sequence belongs to the HEM-1/HEM-2 family. In terms of assembly, interacts with aco-1, gei-13 and gex-2. Interacts with gex-3. As to expression, expressed in neurons.

It localises to the cytoplasm. Functionally, rac effector required for tissue morphogenesis, cell migrations and egg laying. May play a role in egg laying and in yolk protein clatherin-mediated endocytosis by oocytes during oogenesis. Plays a role in the formation of gap junctions between EA and EP endodermal precursor cells in embryos. This Caenorhabditis elegans protein is Membrane-associated protein gex-3.